A 105-amino-acid polypeptide reads, in one-letter code: uncharacterized protein (105 aa).

S2 is subject to N-acetylserine.

This is an uncharacterized protein from Saccharomyces cerevisiae (strain ATCC 204508 / S288c) (Baker's yeast).